The chain runs to 273 residues: Shikimate dehydrogenase (NADP(+)) (273 aa).

Residues 14 to 16 and Thr59 contribute to the shikimate site; that span reads SLS. Lys63 functions as the Proton acceptor in the catalytic mechanism. Shikimate-binding residues include Asn84 and Asp99. NADP(+) contacts are provided by residues 122–126 and Met212; that span reads GAGGA. Tyr214 provides a ligand contact to shikimate. Gly235 contacts NADP(+).

This sequence belongs to the shikimate dehydrogenase family. Homodimer.

The enzyme catalyses shikimate + NADP(+) = 3-dehydroshikimate + NADPH + H(+). Its pathway is metabolic intermediate biosynthesis; chorismate biosynthesis; chorismate from D-erythrose 4-phosphate and phosphoenolpyruvate: step 4/7. In terms of biological role, involved in the biosynthesis of the chorismate, which leads to the biosynthesis of aromatic amino acids. Catalyzes the reversible NADPH linked reduction of 3-dehydroshikimate (DHSA) to yield shikimate (SA). The sequence is that of Shikimate dehydrogenase (NADP(+)) from Aeropyrum pernix (strain ATCC 700893 / DSM 11879 / JCM 9820 / NBRC 100138 / K1).